Reading from the N-terminus, the 327-residue chain is Thiamine-binding periplasmic protein (327 aa).

The first 18 residues, 1 to 18 (MLKKYLPLLLLCAAPAFA), serve as a signal peptide directing secretion. Thiamine contacts are provided by residues 59 to 60 (DG), 161 to 162 (ST), tryptophan 197, and 215 to 218 (YTTS).

Belongs to the bacterial solute-binding protein 1 family. The complex is composed of two ATP-binding proteins (ThiQ), two transmembrane proteins (ThiP) and a solute-binding protein (ThiB).

It is found in the periplasm. In terms of biological role, part of the ABC transporter complex ThiBPQ involved in thiamine import. Is also involved in thiamine pyrophosphate transport. The protein is Thiamine-binding periplasmic protein of Salmonella typhimurium (strain LT2 / SGSC1412 / ATCC 700720).